A 142-amino-acid polypeptide reads, in one-letter code: Small ribosomal subunit protein uS12 (142 aa).

The disordered stretch occupies residues 1–43 (MPTFNQLVRKGRKVIEKKSNSPALQKGFNSKKKKPTDVNSPQK). At Asp102 the chain carries 3-methylthioaspartic acid.

It belongs to the universal ribosomal protein uS12 family. Part of the 30S ribosomal subunit. Contacts proteins S8 and S17. May interact with IF1 in the 30S initiation complex.

Its function is as follows. With S4 and S5 plays an important role in translational accuracy. Interacts with and stabilizes bases of the 16S rRNA that are involved in tRNA selection in the A site and with the mRNA backbone. Located at the interface of the 30S and 50S subunits, it traverses the body of the 30S subunit contacting proteins on the other side and probably holding the rRNA structure together. The combined cluster of proteins S8, S12 and S17 appears to hold together the shoulder and platform of the 30S subunit. The sequence is that of Small ribosomal subunit protein uS12 from Ruminiclostridium cellulolyticum (strain ATCC 35319 / DSM 5812 / JCM 6584 / H10) (Clostridium cellulolyticum).